The following is a 316-amino-acid chain: ATP synthase gamma chain (316 aa).

The protein belongs to the ATPase gamma chain family. F-type ATPases have 2 components, CF(1) - the catalytic core - and CF(0) - the membrane proton channel. CF(1) has five subunits: alpha(3), beta(3), gamma(1), delta(1), epsilon(1). CF(0) has three main subunits: a, b and c.

The protein localises to the cellular thylakoid membrane. Functionally, produces ATP from ADP in the presence of a proton gradient across the membrane. The gamma chain is believed to be important in regulating ATPase activity and the flow of protons through the CF(0) complex. The sequence is that of ATP synthase gamma chain from Prochlorococcus marinus (strain MIT 9312).